Here is a 356-residue protein sequence, read N- to C-terminus: Methionine import ATP-binding protein MetN (356 aa).

An ABC transporter domain is found at 7–250 (IKLDNIDVTF…PRESLTQDFI (244 aa)). 43 to 50 (GYSGAGKS) is a binding site for ATP.

It belongs to the ABC transporter superfamily. Methionine importer (TC 3.A.1.24) family. As to quaternary structure, the complex is composed of two ATP-binding proteins (MetN), two transmembrane proteins (MetI) and a solute-binding protein (MetQ).

Its subcellular location is the cell membrane. The catalysed reaction is L-methionine(out) + ATP + H2O = L-methionine(in) + ADP + phosphate + H(+). It catalyses the reaction D-methionine(out) + ATP + H2O = D-methionine(in) + ADP + phosphate + H(+). Its function is as follows. Part of the ABC transporter complex MetNIQ involved in methionine import. Responsible for energy coupling to the transport system. This chain is Methionine import ATP-binding protein MetN, found in Streptococcus agalactiae serotype III (strain NEM316).